A 145-amino-acid polypeptide reads, in one-letter code: Basic phospholipase A2 Vb-2 (145 aa).

The N-terminal stretch at 1–19 (MNPAHLLVLLAVCVSLLGA) is a signal peptide. Residues 20-27 (ANIPPQPL) constitute a propeptide that is removed on maturation. 7 disulfides stabilise this stretch: C38–C97, C52–C144, C54–C70, C69–C125, C76–C118, C86–C111, and C104–C116. Residues Y53, G55, and G57 each contribute to the Ca(2+) site. The active site involves H73. Position 74 (D74) interacts with Ca(2+). D119 is an active-site residue.

It depends on Ca(2+) as a cofactor. In terms of tissue distribution, expressed by the venom gland.

Its subcellular location is the secreted. The enzyme catalyses a 1,2-diacyl-sn-glycero-3-phosphocholine + H2O = a 1-acyl-sn-glycero-3-phosphocholine + a fatty acid + H(+). In terms of biological role, snake venom phospholipase A2 (PLA2) that has only a weak enzymatic activity. Inhibits neuromuscular transmission by blocking acetylcholine release from the nerve termini. PLA2 catalyzes the calcium-dependent hydrolysis of the 2-acyl groups in 3-sn-phosphoglycerides. The protein is Basic phospholipase A2 Vb-2 of Bungarus fasciatus (Banded krait).